The sequence spans 505 residues: Outer capsid protein VP5 (505 aa).

The involved in membrane permeabilization stretch occupies residues 1 to 42 (MGKFTSFLKRAGNATKRALTSDSAKKMYKLAGKTLQRVVESE).

The protein belongs to the orbivirus VP5 family.

It localises to the virion. In terms of biological role, VP5 protein is one of the two proteins (with VP2) which constitute the virus particle outer capsid. Acts as a membrane permeabilization protein that mediates release of viral particles from endosomal compartments into the cytoplasm. Permeabilization activity is probably negatively regulated by VP2 and is triggered by endosomal degradation of VP2 and exposure to low pH. The sequence is that of Outer capsid protein VP5 (Segment-6) from African horse sickness virus (AHSV).